A 155-amino-acid chain; its full sequence is MVKNTNLINISTYKNDVIYFEKEMHEILNNFAKYFKINKQIILDVSIVSSYTSRKLNFEYRQKDKTTDILSFGYDDFDLYDKMPFLNLGELVICNNKIKKQAIIFNHSIKREFLYLFTHGLVHLYGYDHQSEKEKKEMDFIVDSIFNPLKITRND.

His119, His123, and His129 together coordinate Zn(2+).

This sequence belongs to the endoribonuclease YbeY family. It depends on Zn(2+) as a cofactor.

It localises to the cytoplasm. Single strand-specific metallo-endoribonuclease involved in late-stage 70S ribosome quality control and in maturation of the 3' terminus of the 16S rRNA. The sequence is that of Endoribonuclease YbeY from Mycoplasmopsis synoviae (strain 53) (Mycoplasma synoviae).